We begin with the raw amino-acid sequence, 134 residues long: MPPKTRSGARRGGRRVVKKNVAAGHAYIKSTFNNTIVSITDPHGAVISWASSGHVGFKGSRKSTPFAAQMAAENAARKAMDHGMKKVDVFVKGPGSGRETAIRSLQAAGLEVSSITDATPQPHNGCRPTKRRKV.

Residues 113-122 show a composition bias toward polar residues; the sequence is SSITDATPQP. The tract at residues 113–134 is disordered; the sequence is SSITDATPQPHNGCRPTKRRKV.

This sequence belongs to the universal ribosomal protein uS11 family. As to quaternary structure, part of the 30S ribosomal subunit. Interacts with proteins S7 and S18. Binds to IF-3.

Its function is as follows. Located on the platform of the 30S subunit, it bridges several disparate RNA helices of the 16S rRNA. Forms part of the Shine-Dalgarno cleft in the 70S ribosome. This is Small ribosomal subunit protein uS11 from Corynebacterium aurimucosum (strain ATCC 700975 / DSM 44827 / CIP 107346 / CN-1) (Corynebacterium nigricans).